The chain runs to 145 residues: Basic phospholipase A2 S2-22 (145 aa).

Positions 1 to 19 (MYPAHLLVLLAVCVSLLGA) are cleaved as a signal peptide. A propeptide spanning residues 20–27 (SDIPPQPL) is cleaved from the precursor. 7 disulfides stabilise this stretch: cysteine 38-cysteine 99, cysteine 54-cysteine 144, cysteine 56-cysteine 72, cysteine 71-cysteine 127, cysteine 78-cysteine 120, cysteine 88-cysteine 113, and cysteine 106-cysteine 118. Residues tyrosine 55, glycine 57, and glycine 59 each contribute to the Ca(2+) site. Histidine 75 is a catalytic residue. Residue aspartate 76 coordinates Ca(2+). Aspartate 121 is a catalytic residue.

This sequence belongs to the phospholipase A2 family. Group I subfamily. D49 sub-subfamily. It depends on Ca(2+) as a cofactor. Expressed by the venom gland.

It localises to the secreted. The catalysed reaction is a 1,2-diacyl-sn-glycero-3-phosphocholine + H2O = a 1-acyl-sn-glycero-3-phosphocholine + a fatty acid + H(+). Its function is as follows. Snake venom phospholipase A2 (PLA2) that inhibits collagen-induced platelet aggregation. PLA2 catalyzes the calcium-dependent hydrolysis of the 2-acyl groups in 3-sn-phosphoglycerides. In Austrelaps superbus (Lowland copperhead snake), this protein is Basic phospholipase A2 S2-22.